A 590-amino-acid polypeptide reads, in one-letter code: Putative laccase-19 (590 aa).

A signal peptide spans 1 to 28 (MEKLSMVTSLLCAITVAVLAVAVVSGEA). Plastocyanin-like domains are found at residues 36–152 (VVHE…PRDG) and 161–315 (KDVP…YAGA). Residues N41 and N47 are each glycosylated (N-linked (GlcNAc...) asparagine). Cu cation contacts are provided by H86 and H88. Residue N120 is glycosylated (N-linked (GlcNAc...) asparagine). Cu cation is bound by residues H131 and H133. 6 N-linked (GlcNAc...) asparagine glycosylation sites follow: N205, N344, N378, N397, N434, and N465. Positions 424–566 (DFPIRPPRPF…ATAFIVEDGP (143 aa)) constitute a Plastocyanin-like 3 domain. 8 residues coordinate Cu cation: N483, H486, H488, H545, C546, H547, H551, and M556. Residues 565–590 (GPTPETSLPPPPPEFKRCGNNGLSQP) form a disordered region.

This sequence belongs to the multicopper oxidase family. The cofactor is Cu cation.

It localises to the secreted. The protein resides in the extracellular space. Its subcellular location is the apoplast. It catalyses the reaction 4 hydroquinone + O2 = 4 benzosemiquinone + 2 H2O. In terms of biological role, lignin degradation and detoxification of lignin-derived products. This is Putative laccase-19 (LAC19) from Oryza sativa subsp. indica (Rice).